We begin with the raw amino-acid sequence, 96 residues long: Aspartyl/glutamyl-tRNA(Asn/Gln) amidotransferase subunit C (96 aa).

The protein belongs to the GatC family. In terms of assembly, heterotrimer of A, B and C subunits.

It catalyses the reaction L-glutamyl-tRNA(Gln) + L-glutamine + ATP + H2O = L-glutaminyl-tRNA(Gln) + L-glutamate + ADP + phosphate + H(+). The enzyme catalyses L-aspartyl-tRNA(Asn) + L-glutamine + ATP + H2O = L-asparaginyl-tRNA(Asn) + L-glutamate + ADP + phosphate + 2 H(+). Its function is as follows. Allows the formation of correctly charged Asn-tRNA(Asn) or Gln-tRNA(Gln) through the transamidation of misacylated Asp-tRNA(Asn) or Glu-tRNA(Gln) in organisms which lack either or both of asparaginyl-tRNA or glutaminyl-tRNA synthetases. The reaction takes place in the presence of glutamine and ATP through an activated phospho-Asp-tRNA(Asn) or phospho-Glu-tRNA(Gln). The chain is Aspartyl/glutamyl-tRNA(Asn/Gln) amidotransferase subunit C from Acaryochloris marina (strain MBIC 11017).